The sequence spans 126 residues: Methylglyoxal synthase (126 aa).

The region spanning Met-1–Gln-126 is the MGS-like domain. Substrate-binding positions include His-9, Lys-13, Thr-35–Thr-38, and Ser-55–Gly-56. Asp-61 functions as the Proton donor/acceptor in the catalytic mechanism. A substrate-binding site is contributed by His-88.

This sequence belongs to the methylglyoxal synthase family.

The enzyme catalyses dihydroxyacetone phosphate = methylglyoxal + phosphate. In terms of biological role, catalyzes the formation of methylglyoxal from dihydroxyacetone phosphate. In Thermus thermophilus (strain ATCC BAA-163 / DSM 7039 / HB27), this protein is Methylglyoxal synthase.